The chain runs to 402 residues: Argininosuccinate synthase (402 aa).

ATP is bound by residues 9–17 (AYSGGLDTS) and A36. L-citrulline contacts are provided by Y87 and S92. G117 lines the ATP pocket. The L-aspartate site is built by T119, N123, and D124. Residue N123 coordinates L-citrulline. Positions 127, 176, 185, 261, and 273 each coordinate L-citrulline.

This sequence belongs to the argininosuccinate synthase family. Type 1 subfamily. Homotetramer.

Its subcellular location is the cytoplasm. The catalysed reaction is L-citrulline + L-aspartate + ATP = 2-(N(omega)-L-arginino)succinate + AMP + diphosphate + H(+). The protein operates within amino-acid biosynthesis; L-arginine biosynthesis; L-arginine from L-ornithine and carbamoyl phosphate: step 2/3. In Deinococcus radiodurans (strain ATCC 13939 / DSM 20539 / JCM 16871 / CCUG 27074 / LMG 4051 / NBRC 15346 / NCIMB 9279 / VKM B-1422 / R1), this protein is Argininosuccinate synthase.